Consider the following 121-residue polypeptide: LOB domain-containing protein 24 (121 aa).

One can recognise an LOB domain in the interval 4 to 105 (KRCAACKYLR…NELAKTQAEI (102 aa)).

It belongs to the LOB domain-containing protein family.

The protein is LOB domain-containing protein 24 (LBD24) of Arabidopsis thaliana (Mouse-ear cress).